The sequence spans 359 residues: Non-functional pseudokinase ZRK2 (359 aa).

The segment covering 1 to 10 (MKSMVKKLKQ) has biased composition (basic residues). A disordered region spans residues 1–20 (MKSMVKKLKQSLRSGSLEKR). Residues 64–356 (LKATSNFGSS…KELKQIETLF (293 aa)) enclose the Protein kinase domain. Residues 70 to 78 (FGSSCFVTA) and lysine 97 contribute to the ATP site.

This sequence belongs to the protein kinase superfamily. Ser/Thr protein kinase family. ZRK subfamily.

The protein is Non-functional pseudokinase ZRK2 of Arabidopsis thaliana (Mouse-ear cress).